Consider the following 342-residue polypeptide: Anthranilate phosphoribosyltransferase (342 aa).

Residues glycine 81, 84–85 (GD), threonine 89, 91–94 (NVST), 109–117 (KHGNRAASS), and alanine 121 contribute to the 5-phospho-alpha-D-ribose 1-diphosphate site. Residue glycine 81 coordinates anthranilate. Serine 93 is a binding site for Mg(2+). Residue asparagine 112 coordinates anthranilate. An anthranilate-binding site is contributed by arginine 167. The Mg(2+) site is built by aspartate 226 and glutamate 227.

It belongs to the anthranilate phosphoribosyltransferase family. As to quaternary structure, homodimer. Requires Mg(2+) as cofactor.

It catalyses the reaction N-(5-phospho-beta-D-ribosyl)anthranilate + diphosphate = 5-phospho-alpha-D-ribose 1-diphosphate + anthranilate. Its pathway is amino-acid biosynthesis; L-tryptophan biosynthesis; L-tryptophan from chorismate: step 2/5. In terms of biological role, catalyzes the transfer of the phosphoribosyl group of 5-phosphorylribose-1-pyrophosphate (PRPP) to anthranilate to yield N-(5'-phosphoribosyl)-anthranilate (PRA). This chain is Anthranilate phosphoribosyltransferase, found in Beijerinckia indica subsp. indica (strain ATCC 9039 / DSM 1715 / NCIMB 8712).